Here is a 562-residue protein sequence, read N- to C-terminus: F-box only protein 33 (562 aa).

Residues 68 to 114 (AAGAASLPSELIVHIFSFLPAPDRLRASASCSHWRECLFYPALWPQL) form the F-box domain. The span at 155-173 (GGGPGDGGSGGGTDTGTGG) shows a compositional bias: gly residues. Positions 155–176 (GGGPGDGGSGGGTDTGTGGEDG) are disordered.

Part of the SCF (SKP1-CUL1-F-box) E3 ubiquitin-protein ligase complex SCF(FBXO33) formed of CUL1, SKP1, RBX1 and FBXO33. Interacts via its N-terminus with YBX1 CSD domain. Directly interacts with SKP1 and CUL1.

Its pathway is protein modification; protein ubiquitination. In terms of biological role, substrate recognition component of a SCF (SKP1-CUL1-F-box protein) E3 ubiquitin-protein ligase complex which mediates the ubiquitination and subsequent proteasomal degradation of target proteins. Probably recognizes and binds to phosphorylated target proteins. Recognizes YBX1. The chain is F-box only protein 33 (Fbxo33) from Mus musculus (Mouse).